Here is a 507-residue protein sequence, read N- to C-terminus: UDP-N-acetylglucosamine 1-carboxyvinyltransferase 1 (507 aa).

41–42 lines the phosphoenolpyruvate pocket; that stretch reads KN. UDP-N-acetyl-alpha-D-glucosamine is bound at residue Arg-112. Catalysis depends on Cys-136, which acts as the Proton donor. Cys-136 is modified (2-(S-cysteinyl)pyruvic acid O-phosphothioketal). UDP-N-acetyl-alpha-D-glucosamine-binding positions include 141–145, Asp-328, and Leu-350; that span reads RPIDL.

It belongs to the EPSP synthase family. MurA subfamily.

It is found in the cytoplasm. It carries out the reaction phosphoenolpyruvate + UDP-N-acetyl-alpha-D-glucosamine = UDP-N-acetyl-3-O-(1-carboxyvinyl)-alpha-D-glucosamine + phosphate. It participates in cell wall biogenesis; peptidoglycan biosynthesis. Cell wall formation. Adds enolpyruvyl to UDP-N-acetylglucosamine. This is UDP-N-acetylglucosamine 1-carboxyvinyltransferase 1 from Legionella pneumophila (strain Lens).